We begin with the raw amino-acid sequence, 254 residues long: Casein kinase II subunit beta-2 (254 aa).

It belongs to the casein kinase 2 subunit beta family. Tetramer composed of two alpha chains, one beta chain and one beta' chain. Post-translationally, phosphorylated by alpha subunit.

Its function is as follows. Regulatory subunit of casein kinase II/CK2. As part of the kinase complex regulates the basal catalytic activity of the alpha subunit a constitutively active serine/threonine-protein kinase that phosphorylates a large number of substrates containing acidic residues C-terminal to the phosphorylated serine or threonine. This Schizosaccharomyces pombe (strain 972 / ATCC 24843) (Fission yeast) protein is Casein kinase II subunit beta-2.